Here is a 284-residue protein sequence, read N- to C-terminus: Phosphatidylserine decarboxylase proenzyme (284 aa).

Residues Asp88, His145, and Ser251 each act as charge relay system; for autoendoproteolytic cleavage activity in the active site. The Schiff-base intermediate with substrate; via pyruvic acid; for decarboxylase activity role is filled by Ser251. A Pyruvic acid (Ser); by autocatalysis modification is found at Ser251.

It belongs to the phosphatidylserine decarboxylase family. PSD-B subfamily. Prokaryotic type I sub-subfamily. In terms of assembly, heterodimer of a large membrane-associated beta subunit and a small pyruvoyl-containing alpha subunit. The cofactor is pyruvate. In terms of processing, is synthesized initially as an inactive proenzyme. Formation of the active enzyme involves a self-maturation process in which the active site pyruvoyl group is generated from an internal serine residue via an autocatalytic post-translational modification. Two non-identical subunits are generated from the proenzyme in this reaction, and the pyruvate is formed at the N-terminus of the alpha chain, which is derived from the carboxyl end of the proenzyme. The autoendoproteolytic cleavage occurs by a canonical serine protease mechanism, in which the side chain hydroxyl group of the serine supplies its oxygen atom to form the C-terminus of the beta chain, while the remainder of the serine residue undergoes an oxidative deamination to produce ammonia and the pyruvoyl prosthetic group on the alpha chain. During this reaction, the Ser that is part of the protease active site of the proenzyme becomes the pyruvoyl prosthetic group, which constitutes an essential element of the active site of the mature decarboxylase.

It is found in the cell membrane. The enzyme catalyses a 1,2-diacyl-sn-glycero-3-phospho-L-serine + H(+) = a 1,2-diacyl-sn-glycero-3-phosphoethanolamine + CO2. It participates in phospholipid metabolism; phosphatidylethanolamine biosynthesis; phosphatidylethanolamine from CDP-diacylglycerol: step 2/2. Its function is as follows. Catalyzes the formation of phosphatidylethanolamine (PtdEtn) from phosphatidylserine (PtdSer). The sequence is that of Phosphatidylserine decarboxylase proenzyme from Polaromonas sp. (strain JS666 / ATCC BAA-500).